The chain runs to 514 residues: AAA-ATPase ASD, mitochondrial (514 aa).

Residues 7-24 (VWTNTGSALASLVFIYTI) form a helical membrane-spanning segment. Position 250–257 (250–257 (GPPGTGKS)) interacts with ATP. Disordered stretches follow at residues 311 to 342 (GQRK…ENKG) and 467 to 514 (KEEA…TMKD). Composition is skewed to basic and acidic residues over residues 331–342 (KQMKKDQGENKG) and 467–502 (KEEA…KEEK).

Belongs to the AAA ATPase family. BCS1 subfamily. Mg(2+) is required as a cofactor. As to expression, expressed in seeds, specifically in the embryo.

Its subcellular location is the mitochondrion membrane. The enzyme catalyses ATP + H2O = ADP + phosphate + H(+). In terms of biological role, required to regulate morphology and anatomy during seed maturation. The protein is AAA-ATPase ASD, mitochondrial (AATP1) of Arabidopsis thaliana (Mouse-ear cress).